A 146-amino-acid polypeptide reads, in one-letter code: MRVVLQRSKKASVTVDGEIVGQIPFGLTLLVGITHEDTEKDATYIAEKISNLRIFEDESGKMNHSVLDVEGQVLSISQFTLYGDCRKGRRPNFMDAAKPDYAERLYDFFNEEVRKQGLHVETGKFGAMMDVSLINDGPVTLIVESK.

The Gly-cisPro motif, important for rejection of L-amino acids motif lies at 137–138; that stretch reads GP.

This sequence belongs to the DTD family. As to quaternary structure, homodimer.

The protein resides in the cytoplasm. It catalyses the reaction glycyl-tRNA(Ala) + H2O = tRNA(Ala) + glycine + H(+). The catalysed reaction is a D-aminoacyl-tRNA + H2O = a tRNA + a D-alpha-amino acid + H(+). An aminoacyl-tRNA editing enzyme that deacylates mischarged D-aminoacyl-tRNAs. Also deacylates mischarged glycyl-tRNA(Ala), protecting cells against glycine mischarging by AlaRS. Acts via tRNA-based rather than protein-based catalysis; rejects L-amino acids rather than detecting D-amino acids in the active site. By recycling D-aminoacyl-tRNA to D-amino acids and free tRNA molecules, this enzyme counteracts the toxicity associated with the formation of D-aminoacyl-tRNA entities in vivo and helps enforce protein L-homochirality. The sequence is that of D-aminoacyl-tRNA deacylase from Bacillus cereus (strain G9842).